Consider the following 100-residue polypeptide: Proline-rich protein 15-like protein (100 aa).

The segment at 26-100 is disordered; that stretch reads PDTYTQSEGG…LFDDREGKGQ (75 aa). Residues 53-62 are compositionally biased toward basic and acidic residues; sequence RLEKIVDKNT.

Belongs to the PRR15 family.

The sequence is that of Proline-rich protein 15-like protein (PRR15L) from Bos taurus (Bovine).